The primary structure comprises 349 residues: Xylitol-binding protein (349 aa).

The first 22 residues, 1-22 (MNITSKIGAIAAAGAVGLGLTA), serve as a signal peptide directing secretion. The N-palmitoyl cysteine moiety is linked to residue C23. C23 carries S-diacylglycerol cysteine lipidation. Xylitol-binding residues include Y42, N121, R173, N224, D249, and Q269.

It belongs to the bacterial solute-binding protein 2 family.

It localises to the cell membrane. Its function is as follows. Part of an ABC transporter complex likely involved in xylitol import. Binds xylitol. The polypeptide is Xylitol-binding protein (Mycolicibacterium smegmatis (strain ATCC 700084 / mc(2)155) (Mycobacterium smegmatis)).